We begin with the raw amino-acid sequence, 402 residues long: Phosphoglycerate kinase (402 aa).

Residues 24–26, Arg40, 63–66, Arg122, and Arg155 each bind substrate; these read DFN and HFGR. ATP-binding positions include Lys206, Gly297, Glu328, and 357-360; that span reads GGDS.

It belongs to the phosphoglycerate kinase family. As to quaternary structure, monomer.

The protein resides in the cytoplasm. The catalysed reaction is (2R)-3-phosphoglycerate + ATP = (2R)-3-phospho-glyceroyl phosphate + ADP. The protein operates within carbohydrate degradation; glycolysis; pyruvate from D-glyceraldehyde 3-phosphate: step 2/5. The polypeptide is Phosphoglycerate kinase (Synechococcus sp. (strain ATCC 27144 / PCC 6301 / SAUG 1402/1) (Anacystis nidulans)).